The primary structure comprises 652 residues: DNA ligase (652 aa).

Residues 29–33 (DSEYD), 78–79 (SL), and Glu107 each bind NAD(+). Lys109 serves as the catalytic N6-AMP-lysine intermediate. 4 residues coordinate NAD(+): Arg130, Glu164, Lys278, and Lys302. Residues Cys395, Cys398, Cys413, and Cys418 each coordinate Zn(2+). In terms of domain architecture, BRCT spans 577–652 (VADAALSGLT…VRDEAWLESL (76 aa)).

It belongs to the NAD-dependent DNA ligase family. LigA subfamily. Mg(2+) is required as a cofactor. The cofactor is Mn(2+).

The catalysed reaction is NAD(+) + (deoxyribonucleotide)n-3'-hydroxyl + 5'-phospho-(deoxyribonucleotide)m = (deoxyribonucleotide)n+m + AMP + beta-nicotinamide D-nucleotide.. Its function is as follows. DNA ligase that catalyzes the formation of phosphodiester linkages between 5'-phosphoryl and 3'-hydroxyl groups in double-stranded DNA using NAD as a coenzyme and as the energy source for the reaction. It is essential for DNA replication and repair of damaged DNA. The sequence is that of DNA ligase from Streptococcus pneumoniae (strain P1031).